Reading from the N-terminus, the 495-residue chain is UPF0371 protein CE2832 (495 aa).

This sequence belongs to the UPF0371 family.

The protein is UPF0371 protein CE2832 of Corynebacterium efficiens (strain DSM 44549 / YS-314 / AJ 12310 / JCM 11189 / NBRC 100395).